Reading from the N-terminus, the 374-residue chain is Mitochondrial import inner membrane translocase subunit tim50 (374 aa).

The N-terminal 48 residues, 1–48, are a transit peptide targeting the mitochondrion; it reads MILNKVAKCYGKQIGFFGNKTTQFIKPNQTIFLIGGTKRLFTTQQQQS. Residues 42–97 form a disordered region; that stretch reads TTQQQQSPKKEEPKSEQQKKVEDKTEEKEKEKDEEENENEKEKENEDGEGQKKKSK. Basic and acidic residues-rich tracts occupy residues 49-72 and 81-93; these read PKKE…KEKE and EKEK…EGQK. The chain crosses the membrane as a helical span at residues 103 to 125; the sequence is IVTSVTSTFFAGVLVASTFGYLT. Residues 191-332 enclose the FCP1 homology domain; the sequence is PGGKKYTLVI…IELLPVLESF (142 aa).

This sequence belongs to the TIM50 family. In terms of assembly, component of the mitochondrial import inner membrane translocase complex.

Its subcellular location is the mitochondrion inner membrane. Component of the mitochondrial import inner membrane translocase that mediates the translocation of transit peptide-containing proteins across the mitochondrial inner membrane. In Dictyostelium discoideum (Social amoeba), this protein is Mitochondrial import inner membrane translocase subunit tim50 (timm50).